The chain runs to 884 residues: Probable LRR receptor-like serine/threonine-protein kinase PAM74 (884 aa).

The N-terminal stretch at 1–23 (MDSPCWLLLLLLGAFAIIGCVQA) is a signal peptide. Topologically, residues 24–510 (QDQQEFISLD…TEKNSKKKFP (487 aa)) are extracellular. N-linked (GlcNAc...) asparagine glycans are attached at residues asparagine 143, asparagine 182, asparagine 200, asparagine 256, asparagine 289, asparagine 400, asparagine 403, asparagine 417, asparagine 433, asparagine 444, asparagine 465, and asparagine 470. 3 LRR repeats span residues 412–433 (RVLSLNLSSSGLTGIIAAAIQN), 436–457 (HLEKLDLSNNTLTGVVPEFLAQ), and 460–480 (SLVIINLSGNNLSGPLPQGLR). The helical transmembrane segment at 511–531 (VVIVASVASVAIIVAVLVIIF) threads the bilayer. The Cytoplasmic portion of the chain corresponds to 532-884 (VLSKKKSSTV…FDTELFPRAR (353 aa)). A Phosphothreonine modification is found at threonine 570. The Protein kinase domain maps to 579–852 (NNFQRVVGEG…QVANELKECL (274 aa)). Residues 585-593 (VGEGGFGVV) and lysine 607 contribute to the ATP site. At tyrosine 652 the chain carries Phosphotyrosine. The active-site Proton acceptor is the aspartate 704. Serine 738 is modified (phosphoserine). Threonine 739 and threonine 744 each carry phosphothreonine. Residue tyrosine 752 is modified to Phosphotyrosine.

The protein belongs to the protein kinase superfamily. Ser/Thr protein kinase family. As to quaternary structure, binds to the ammonium transporter AMT1-1.

The protein resides in the membrane. It catalyses the reaction L-seryl-[protein] + ATP = O-phospho-L-seryl-[protein] + ADP + H(+). It carries out the reaction L-threonyl-[protein] + ATP = O-phospho-L-threonyl-[protein] + ADP + H(+). Functionally, required for accurate photosynthesis. The protein is Probable LRR receptor-like serine/threonine-protein kinase PAM74 (PAM74) of Arabidopsis thaliana (Mouse-ear cress).